The chain runs to 512 residues: ADP,ATP carrier protein 4 (512 aa).

12 consecutive transmembrane segments (helical) span residues 34–54 (ISKF…QNLI), 71–91 (ISFL…VMYV), 102–122 (IFYL…YVIF), 157–177 (FSLF…LLFW), 192–212 (FYPL…HFLE), 231–251 (FHTL…IVSI), 296–316 (LIAT…GPWK), 330–350 (AAFI…FVLL), 361–381 (FTSA…FFAF), 390–410 (LIIA…IGAI), 448–468 (VIGT…IFII), and 476–496 (SISI…IWAT).

Belongs to the ADP/ATP translocase tlc family.

It is found in the cell membrane. In terms of biological role, provides the rickettsial cell with host ATP in exchange for rickettsial ADP. This is an obligate exchange system. This energy acquiring activity is an important component of rickettsial parasitism. This chain is ADP,ATP carrier protein 4 (tlcD), found in Rickettsia typhi (strain ATCC VR-144 / Wilmington).